A 156-amino-acid polypeptide reads, in one-letter code: 6,7-dimethyl-8-ribityllumazine synthase (156 aa).

5-amino-6-(D-ribitylamino)uracil contacts are provided by residues Phe22, 57–59, and 81–83; these read AYE and TVI. 86 to 87 provides a ligand contact to (2S)-2-hydroxy-3-oxobutyl phosphate; sequence GT. The active-site Proton donor is His89. Phe114 contributes to the 5-amino-6-(D-ribitylamino)uracil binding site. Residue Arg128 participates in (2S)-2-hydroxy-3-oxobutyl phosphate binding.

The protein belongs to the DMRL synthase family. Forms an icosahedral capsid composed of 60 subunits, arranged as a dodecamer of pentamers.

It catalyses the reaction (2S)-2-hydroxy-3-oxobutyl phosphate + 5-amino-6-(D-ribitylamino)uracil = 6,7-dimethyl-8-(1-D-ribityl)lumazine + phosphate + 2 H2O + H(+). It participates in cofactor biosynthesis; riboflavin biosynthesis; riboflavin from 2-hydroxy-3-oxobutyl phosphate and 5-amino-6-(D-ribitylamino)uracil: step 1/2. Its function is as follows. Catalyzes the formation of 6,7-dimethyl-8-ribityllumazine by condensation of 5-amino-6-(D-ribitylamino)uracil with 3,4-dihydroxy-2-butanone 4-phosphate. This is the penultimate step in the biosynthesis of riboflavin. The protein is 6,7-dimethyl-8-ribityllumazine synthase of Mannheimia succiniciproducens (strain KCTC 0769BP / MBEL55E).